The following is a 1905-amino-acid chain: Low-density lipoprotein receptor-related protein 4 (1905 aa).

The N-terminal stretch at 1 to 20 is a signal peptide; sequence MRRWWGALLLGALLCAHGTA. Over 21-1723 the chain is Extracellular; that stretch reads SNLECACGRS…VPAAPGEGLH (1703 aa). 8 LDL-receptor class A domains span residues 26 to 67, 70 to 106, 109 to 144, 147 to 183, 190 to 226, 230 to 266, 269 to 305, and 311 to 350; these read ACGR…DGCT, TCSP…QDCP, ECEE…EQCD, KCSD…ESCP, PCNL…SDCS, PCRS…RNCT, MCTA…ENCE, and QCAS…QNCR. 30 cysteine pairs are disulfide-bonded: Cys27–Cys44, Cys34–Cys57, Cys51–Cys66, Cys71–Cys83, Cys78–Cys96, Cys90–Cys105, Cys110–Cys122, Cys117–Cys135, Cys129–Cys143, Cys148–Cys160, Cys155–Cys173, Cys167–Cys182, Cys191–Cys203, Cys198–Cys216, Cys210–Cys225, Cys231–Cys243, Cys238–Cys256, Cys250–Cys265, Cys270–Cys282, Cys277–Cys295, Cys289–Cys304, Cys312–Cys324, Cys319–Cys337, Cys331–Cys349, Cys358–Cys369, Cys365–Cys378, Cys380–Cys393, Cys399–Cys409, Cys405–Cys418, and Cys420–Cys433. N-linked (GlcNAc...) asparagine glycosylation occurs at Asn264. Residues 354-394 enclose the EGF-like 1; atypical domain; that stretch reads GEENCNVNNGGCAQKCQMIRGAVQCTCHTGYRLTEDGRTCQ. One can recognise an EGF-like 2; calcium-binding domain in the interval 395-434; that stretch reads DVNECAEEGYCSQGCTNSEGAFQCWCEAGYELRPDRRSCK. LDL-receptor class B repeat units follow at residues 480 to 522, 523 to 565, 566 to 609, 610 to 652, and 653 to 693; these read ELVF…DWVH, DKLY…HPME, GTIY…DYAG, RRMY…FEDS, and LYWT…LHPQ. An N-linked (GlcNAc...) asparagine glycan is attached at Asn498. Residues 698 to 737 enclose the EGF-like 3 domain; the sequence is GKNRCGDNNGGCTHLCLPSGQNYTCACPTGFRKINSHACA. Disulfide bonds link Cys702-Cys713, Cys709-Cys722, and Cys724-Cys736. Residue Asn719 is glycosylated (N-linked (GlcNAc...) asparagine). LDL-receptor class B repeat units lie at residues 785–827, 828–870, 871–914, 915–956, and 957–998; these read DHVY…DWVT, NKLY…EPMG, GYMY…DYGS, QRLY…LYGQ, and RIYW…FHRQ. Asn901 is a glycosylation site (N-linked (GlcNAc...) asparagine). Asn1077 is a glycosylation site (N-linked (GlcNAc...) asparagine). LDL-receptor class B repeat units lie at residues 1093-1135, 1136-1178, 1179-1222, 1223-1263, 1264-1306, 1397-1439, 1440-1482, 1483-1526, 1527-1568, and 1569-1610; these read GKVY…DAIG, RKVY…YHEM, GFMY…DKTS, SQLL…LLDS, YIYW…DRAQ, GKVY…DWVA, RNLY…FPRK, GYLF…DYDT, RRIY…QDRW, and IYWT…SPQR. Asn1415 and Asn1467 each carry an N-linked (GlcNAc...) asparagine glycan. Residues 1659–1696 are disordered; it reads PRATSLNEKSPVLPNTLPTTLHSSTTRTRTSPEGAEGR. Residues 1671-1690 are compositionally biased toward low complexity; it reads LPNTLPTTLHSSTTRTRTSP. A helical membrane pass occupies residues 1724–1746; it reads VSYAVGGLLSVLLILLVTAALML. Residues 1747–1905 lie on the Cytoplasmic side of the membrane; it reads YRHRKSKFTD…ERKLSSESQV (159 aa). Residues 1853–1905 are disordered; it reads SSGSLDDTETEQLLQEEQSECSSVHTATTPERRGSLPDTGWKHERKLSSESQV. Polar residues predominate over residues 1872–1881; sequence ECSSVHTATT. Over residues 1882–1905 the composition is skewed to basic and acidic residues; that stretch reads PERRGSLPDTGWKHERKLSSESQV.

Belongs to the LDLR family. In terms of assembly, homooligomer. Interacts with MUSK; the heterodimer forms an AGRIN receptor complex that binds AGRIN resulting in activation of MUSK. Interacts (via the extracellular domain) with SOST; the interaction facilitates the inhibition of Wnt signaling. Interacts with MESD; the interaction promotes glycosylation of LRP4 and its cell-surface expression. In terms of processing, N-glycosylation is required for cell surface location. Expressed in different regions of the brain, mainly in the olfactory bulb, at lower level in the cerebral cortex and hippocampus.

The protein localises to the cell membrane. Functionally, mediates SOST-dependent inhibition of bone formation. Functions as a specific facilitator of SOST-mediated inhibition of Wnt signaling. Plays a key role in the formation and the maintenance of the neuromuscular junction (NMJ), the synapse between motor neuron and skeletal muscle. Directly binds AGRIN and recruits it to the MUSK signaling complex. Mediates the AGRIN-induced phosphorylation of MUSK, the kinase of the complex. The activation of MUSK in myotubes induces the formation of NMJ by regulating different processes including the transcription of specific genes and the clustering of AChR in the postsynaptic membrane. Alternatively, may be involved in the negative regulation of the canonical Wnt signaling pathway, being able to antagonize the LRP6-mediated activation of this pathway. More generally, has been proposed to function as a cell surface endocytic receptor binding and internalizing extracellular ligands for degradation by lysosomes. Plays an essential role in the process of digit differentiation. This chain is Low-density lipoprotein receptor-related protein 4 (Lrp4), found in Rattus norvegicus (Rat).